The primary structure comprises 78 residues: DNA-directed RNA polymerase subunit omega (78 aa).

This sequence belongs to the RNA polymerase subunit omega family. As to quaternary structure, in cyanobacteria the RNAP catalytic core is composed of 2 alpha, 1 beta, 1 beta', 1 gamma and 1 omega subunit. When a sigma factor is associated with the core the holoenzyme is formed, which can initiate transcription.

It catalyses the reaction RNA(n) + a ribonucleoside 5'-triphosphate = RNA(n+1) + diphosphate. In terms of biological role, promotes RNA polymerase assembly. Latches the N- and C-terminal regions of the beta' subunit thereby facilitating its interaction with the beta and alpha subunits. The sequence is that of DNA-directed RNA polymerase subunit omega from Nostoc punctiforme (strain ATCC 29133 / PCC 73102).